The sequence spans 181 residues: ATP synthase subunit b (181 aa).

Residues 16-36 (LIPPIPELVIGLIAFVIVFGF) traverse the membrane as a helical segment.

Belongs to the ATPase B chain family. F-type ATPases have 2 components, F(1) - the catalytic core - and F(0) - the membrane proton channel. F(1) has five subunits: alpha(3), beta(3), gamma(1), delta(1), epsilon(1). F(0) has three main subunits: a(1), b(2) and c(10-14). The alpha and beta chains form an alternating ring which encloses part of the gamma chain. F(1) is attached to F(0) by a central stalk formed by the gamma and epsilon chains, while a peripheral stalk is formed by the delta and b chains.

It is found in the cell membrane. Its function is as follows. F(1)F(0) ATP synthase produces ATP from ADP in the presence of a proton or sodium gradient. F-type ATPases consist of two structural domains, F(1) containing the extramembraneous catalytic core and F(0) containing the membrane proton channel, linked together by a central stalk and a peripheral stalk. During catalysis, ATP synthesis in the catalytic domain of F(1) is coupled via a rotary mechanism of the central stalk subunits to proton translocation. In terms of biological role, component of the F(0) channel, it forms part of the peripheral stalk, linking F(1) to F(0). This chain is ATP synthase subunit b, found in Streptomyces lividans.